Consider the following 148-residue polypeptide: Nucleoside diphosphate kinase 1 (148 aa).

Lysine 9, phenylalanine 57, arginine 85, threonine 91, arginine 102, and asparagine 112 together coordinate ATP. The active-site Pros-phosphohistidine intermediate is histidine 115.

Belongs to the NDK family. It depends on Mg(2+) as a cofactor.

The enzyme catalyses a 2'-deoxyribonucleoside 5'-diphosphate + ATP = a 2'-deoxyribonucleoside 5'-triphosphate + ADP. It catalyses the reaction a ribonucleoside 5'-diphosphate + ATP = a ribonucleoside 5'-triphosphate + ADP. Functionally, major role in the synthesis of nucleoside triphosphates other than ATP. The ATP gamma phosphate is transferred to the NDP beta phosphate via a ping-pong mechanism, using a phosphorylated active-site intermediate. In Nicotiana tabacum (Common tobacco), this protein is Nucleoside diphosphate kinase 1.